The primary structure comprises 547 residues: CTP synthase (547 aa).

An amidoligase domain region spans residues 1-265; it reads MARYIFITGG…DQAVLDAFDI (265 aa). A CTP-binding site is contributed by Ser13. Ser13 contacts UTP. ATP is bound by residues 14-19 and Asp71; that span reads SLGKGL. Residues Asp71 and Glu139 each contribute to the Mg(2+) site. Residues 146-148, 186-191, and Lys222 each bind CTP; these read DIE and KTKPTQ. UTP contacts are provided by residues 186–191 and Lys222; that span reads KTKPTQ. The 256-residue stretch at 291-546 folds into the Glutamine amidotransferase type-1 domain; it reads KVAIVGKYTQ…IRAAKENSRL (256 aa). Gly353 lines the L-glutamine pocket. Cys380 serves as the catalytic Nucleophile; for glutamine hydrolysis. Residues 381 to 384, Glu404, and Arg474 each bind L-glutamine; that span reads LGMQ. Active-site residues include His519 and Glu521.

The protein belongs to the CTP synthase family. Homotetramer.

It carries out the reaction UTP + L-glutamine + ATP + H2O = CTP + L-glutamate + ADP + phosphate + 2 H(+). The enzyme catalyses L-glutamine + H2O = L-glutamate + NH4(+). The catalysed reaction is UTP + NH4(+) + ATP = CTP + ADP + phosphate + 2 H(+). It functions in the pathway pyrimidine metabolism; CTP biosynthesis via de novo pathway; CTP from UDP: step 2/2. Allosterically activated by GTP, when glutamine is the substrate; GTP has no effect on the reaction when ammonia is the substrate. The allosteric effector GTP functions by stabilizing the protein conformation that binds the tetrahedral intermediate(s) formed during glutamine hydrolysis. Inhibited by the product CTP, via allosteric rather than competitive inhibition. Functionally, catalyzes the ATP-dependent amination of UTP to CTP with either L-glutamine or ammonia as the source of nitrogen. Regulates intracellular CTP levels through interactions with the four ribonucleotide triphosphates. The chain is CTP synthase from Roseobacter denitrificans (strain ATCC 33942 / OCh 114) (Erythrobacter sp. (strain OCh 114)).